The sequence spans 247 residues: 14-3-3 protein gamma (247 aa).

It belongs to the 14-3-3 family. In terms of assembly, homodimer, and heterodimer with other family members.

The protein resides in the cytoplasm. Functionally, adapter protein implicated in the regulation of a large spectrum of both general and specialized signaling pathways. Binds to a large number of partners, usually by recognition of a phosphoserine or phosphothreonine motif. Binding generally results in the modulation of the activity of the binding partner. The sequence is that of 14-3-3 protein gamma (YWHAG) from Gallus gallus (Chicken).